The chain runs to 293 residues: Elongation factor Ts (293 aa).

The involved in Mg(2+) ion dislocation from EF-Tu stretch occupies residues 80 to 83 (TDFV).

This sequence belongs to the EF-Ts family.

The protein resides in the cytoplasm. Functionally, associates with the EF-Tu.GDP complex and induces the exchange of GDP to GTP. It remains bound to the aminoacyl-tRNA.EF-Tu.GTP complex up to the GTP hydrolysis stage on the ribosome. This is Elongation factor Ts from Aeromonas hydrophila subsp. hydrophila (strain ATCC 7966 / DSM 30187 / BCRC 13018 / CCUG 14551 / JCM 1027 / KCTC 2358 / NCIMB 9240 / NCTC 8049).